The primary structure comprises 237 residues: Ribosomal RNA small subunit methyltransferase G (237 aa).

Residues Gly76, Phe81, 128 to 129, and Arg147 contribute to the S-adenosyl-L-methionine site; that span reads VE.

The protein belongs to the methyltransferase superfamily. RNA methyltransferase RsmG family.

The protein localises to the cytoplasm. Functionally, specifically methylates the N7 position of a guanine in 16S rRNA. The protein is Ribosomal RNA small subunit methyltransferase G of Prochlorococcus marinus (strain AS9601).